We begin with the raw amino-acid sequence, 105 residues long: 3-phenylpropionate/cinnamic acid dioxygenase ferredoxin subunit (105 aa).

Positions 4-99 constitute a Rieske domain; the sequence is LFVCTVEELP…VVVKDGNIYI (96 aa). The [2Fe-2S] cluster site is built by cysteine 42, histidine 44, cysteine 62, and histidine 65.

This sequence belongs to the bacterial ring-hydroxylating dioxygenase ferredoxin component family. As to quaternary structure, this dioxygenase system consists of four proteins: the two subunits of the hydroxylase component (HcaE and HcaF), a ferredoxin (HcaC) and a ferredoxin reductase (HcaD). Requires [2Fe-2S] cluster as cofactor.

It functions in the pathway aromatic compound metabolism; 3-phenylpropanoate degradation. Its function is as follows. Part of the multicomponent 3-phenylpropionate dioxygenase, that converts 3-phenylpropionic acid (PP) and cinnamic acid (CI) into 3-phenylpropionate-dihydrodiol (PP-dihydrodiol) and cinnamic acid-dihydrodiol (CI-dihydrodiol), respectively. This protein seems to be a 2Fe-2S ferredoxin. The sequence is that of 3-phenylpropionate/cinnamic acid dioxygenase ferredoxin subunit from Photorhabdus laumondii subsp. laumondii (strain DSM 15139 / CIP 105565 / TT01) (Photorhabdus luminescens subsp. laumondii).